We begin with the raw amino-acid sequence, 337 residues long: uncharacterized protein (337 aa).

The 59-residue stretch at 279–337 folds into the AFP-like domain; the sequence is SIVAKRNIKKGEYLSVDNISFKRPGRGIETKYLSIILNRKIKNDKEEDDIIYWDDLLGD.

This sequence to B.subtilis SpsE.

This is an uncharacterized protein from Methanocaldococcus jannaschii (strain ATCC 43067 / DSM 2661 / JAL-1 / JCM 10045 / NBRC 100440) (Methanococcus jannaschii).